An 83-amino-acid polypeptide reads, in one-letter code: U5-theraphotoxin-Hs1b 1 (83 aa).

A signal peptide spans 1-21 (MKTSMFLTLTGLVLLFVVCYA). A propeptide spanning residues 22-49 (SESEEKEFPKELLSSIFAADSDFKEEER) is cleaved from the precursor. Intrachain disulfides connect Cys-51–Cys-63, Cys-56–Cys-68, and Cys-62–Cys-75.

Belongs to the neurotoxin 10 (Hwtx-1) family. 51 (Hntx-8) subfamily. Hntx-8 sub-subfamily. In terms of tissue distribution, expressed by the venom gland.

The protein localises to the secreted. Its function is as follows. Weakly inhibits 5HT3A receptors and Kv1.3/KCNA3 voltage-gated potassium channels. Agglutinates erythrocytes. In Cyriopagopus schmidti (Chinese bird spider), this protein is U5-theraphotoxin-Hs1b 1.